Consider the following 751-residue polypeptide: Leucine-rich repeat-containing protein 56 homolog (751 aa).

The interval 1–149 (MKKSTVLDAR…IDKSRDNGQL (149 aa)) is disordered. Pro residues predominate over residues 13–22 (GPLPRRPQQP). Polar residues-rich tracts occupy residues 28–39 (RNSSQVEKNNAR) and 60–87 (HSQS…NLNS). LRR repeat units lie at residues 210 to 235 (MPQL…NYAN), 236 to 256 (LRRL…GACA), 258 to 279 (VLEE…TEVS), 280 to 304 (STLQ…TLPQ), and 307 to 328 (KMKH…VELS). Disordered regions lie at residues 430 to 538 (SRSH…QRQQ), 645 to 698 (TCTH…EKDW), and 717 to 751 (EAAL…PVVF). Polar residues-rich tracts occupy residues 456–471 (KNSQ…TNQG) and 662–671 (QQEQPTTAGA). Residues 717–738 (EAALKERVQGSKEVDGGGLEKV) are compositionally biased toward basic and acidic residues. Positions 739 to 751 (ESEDEEDVSPVVF) are enriched in acidic residues.

It belongs to the LRRC56 family.

The protein resides in the cell projection. Its subcellular location is the cilium. The protein localises to the flagellum. Its function is as follows. Required for the assembly of dynein arms in the distal portion of flagellum axoneme. The polypeptide is Leucine-rich repeat-containing protein 56 homolog (Trypanosoma brucei brucei (strain 927/4 GUTat10.1)).